A 291-amino-acid polypeptide reads, in one-letter code: Phytanoyl-CoA dioxygenase domain-containing protein 1 (291 aa).

T55 bears the Phosphothreonine mark. 2-oxoglutarate-binding positions include K102, M141, 156 to 158 (HQD), and W174. Fe cation contacts are provided by H156 and D158. H246 lines the Fe cation pocket. 2-oxoglutarate-binding residues include S248 and R257.

This sequence belongs to the PhyH family. PHYHD1 subfamily. Fe cation serves as cofactor.

Activity is increased by ascorbate. Inhibited by myristoyl-CoA. Functionally, 2-oxoglutarate(2OG)-dependent dioxygenase that catalyzes the conversion of 2-oxoglutarate to succinate and CO(2) in an iron-dependent manner. However, does not couple 2OG turnover to the hydroxylation of acyl-coenzyme A derivatives, implying that it is not directly involved in phytanoyl coenzyme-A metabolism. Does not show detectable activity towards fatty acid CoA thioesters. Its function is as follows. Isoform 2 probably lacks enzyme activity. Isoform 3 probably lacks enzyme activity. In Homo sapiens (Human), this protein is Phytanoyl-CoA dioxygenase domain-containing protein 1.